The primary structure comprises 431 residues: Putative F-box/FBD/LRR-repeat protein At3g56780 (431 aa).

Residues 6–62 enclose the F-box domain; the sequence is CSCINELPDDLILKILSFVSTKHVVVTSLLSKKWKSLWTRVPILKYDVRDHTRFERF. 8 LRR repeats span residues 56–82, 88–113, 135–161, 162–187, 209–236, 237–262, 264–285, and 357–382; these read HTRFERFLDKSLFSHQSHVLESLHVEL, NKDIGPWIRTALHHHHCHLRELEIDA, LKGIVIDVEAPLTTVSLPSLKTLHIDH, SSLFDFGSLQMLLSNCNFITDLMVIR, LEGLKDVISISSSSAVCLPLLKTLHVAR, MEDFNNDSFCRLLSNCPVLSDLTLEE, TSDVLLNLDIDMPYLQRLSIIT, and CSERSVEMLVDLLLCFTKLVVLKLEH. The 33-residue stretch at 391 to 423 folds into the FBD domain; that stretch reads RWEPPSLVPECLLSSLEALEWKGYTGRYGDKDL.

This Arabidopsis thaliana (Mouse-ear cress) protein is Putative F-box/FBD/LRR-repeat protein At3g56780.